The chain runs to 396 residues: Elongation factor Tu (396 aa).

A tr-type G domain is found at 10 to 206 (KEHVNIGTIG…AVDTWIETPV (197 aa)). Residues 19–26 (GHVDHGKT) form a G1 region. 19–26 (GHVDHGKT) provides a ligand contact to GTP. Thr26 serves as a coordination point for Mg(2+). Positions 60–64 (GITIN) are G2. Residues 81-84 (DCPG) form a G3 region. GTP-binding positions include 81 to 85 (DCPGH) and 136 to 139 (NKCD). The interval 136–139 (NKCD) is G4. Residues 176 to 178 (SAL) are G5.

It belongs to the TRAFAC class translation factor GTPase superfamily. Classic translation factor GTPase family. EF-Tu/EF-1A subfamily. Monomer.

Its subcellular location is the cytoplasm. The catalysed reaction is GTP + H2O = GDP + phosphate + H(+). Functionally, GTP hydrolase that promotes the GTP-dependent binding of aminoacyl-tRNA to the A-site of ribosomes during protein biosynthesis. This Mycoplasmopsis agalactiae (strain NCTC 10123 / CIP 59.7 / PG2) (Mycoplasma agalactiae) protein is Elongation factor Tu.